A 103-amino-acid chain; its full sequence is Small ribosomal subunit protein uS10c (103 aa).

The protein belongs to the universal ribosomal protein uS10 family. In terms of assembly, part of the 30S ribosomal subunit.

It is found in the plastid. Its subcellular location is the chloroplast. Functionally, involved in the binding of tRNA to the ribosomes. The chain is Small ribosomal subunit protein uS10c from Trieres chinensis (Marine centric diatom).